A 410-amino-acid chain; its full sequence is Imidazolonepropionase (410 aa).

Fe(3+) contacts are provided by His73 and His75. Positions 73 and 75 each coordinate Zn(2+). 4-imidazolone-5-propanoate is bound by residues Arg82, Tyr145, and His178. Tyr145 is a binding site for N-formimidoyl-L-glutamate. His243 serves as a coordination point for Fe(3+). His243 contacts Zn(2+). A 4-imidazolone-5-propanoate-binding site is contributed by Gln246. Asp318 serves as a coordination point for Fe(3+). Position 318 (Asp318) interacts with Zn(2+). N-formimidoyl-L-glutamate contacts are provided by Asn320 and Gly322. Residue Ser323 coordinates 4-imidazolone-5-propanoate.

It belongs to the metallo-dependent hydrolases superfamily. HutI family. Requires Zn(2+) as cofactor. Fe(3+) serves as cofactor.

It localises to the cytoplasm. It catalyses the reaction 4-imidazolone-5-propanoate + H2O = N-formimidoyl-L-glutamate. It participates in amino-acid degradation; L-histidine degradation into L-glutamate; N-formimidoyl-L-glutamate from L-histidine: step 3/3. Catalyzes the hydrolytic cleavage of the carbon-nitrogen bond in imidazolone-5-propanoate to yield N-formimidoyl-L-glutamate. It is the third step in the universal histidine degradation pathway. The protein is Imidazolonepropionase of Shewanella frigidimarina (strain NCIMB 400).